The sequence spans 800 residues: Nucleolar complex protein 3 homolog (800 aa).

Positions 37-90 (STIKKYRKEQRKLRQAVKDAVSKKPFPLEDPKSKRPVKGMEREEEDEEDQALPL) are disordered. Positions 40-51 (KKYRKEQRKLRQ) are enriched in basic residues. Residues 52-77 (AVKDAVSKKPFPLEDPKSKRPVKGME) show a composition bias toward basic and acidic residues. Over residues 78 to 90 (REEEDEEDQALPL) the composition is skewed to acidic residues. Residue Lys-333 forms a Glycyl lysine isopeptide (Lys-Gly) (interchain with G-Cter in SUMO2) linkage. Residues 450-489 (FKEKRKTLSRMQRKWKKAEEKLERELREAEASESTERKLK) are a coiled coil.

The protein belongs to the CBF/MAK21 family.

The protein localises to the nucleus. The protein resides in the nucleolus. The chain is Nucleolar complex protein 3 homolog (NOC3L) from Cricetulus griseus (Chinese hamster).